We begin with the raw amino-acid sequence, 491 residues long: Cytosolic Fe-S cluster assembly factor NAR1 (491 aa).

[4Fe-4S] cluster is bound by residues cysteine 20, cysteine 59, cysteine 62, cysteine 65, cysteine 177, cysteine 231, cysteine 412, and cysteine 416.

Belongs to the NARF family. As to quaternary structure, interacts with CIA1.

Its subcellular location is the cytoplasm. It localises to the nucleus. Essential component of a cytosolic Fe/S protein assembly machinery. Required for maturation of extramitochondrial Fe/S proteins. May play a role in the transfer of pre-assembled Fe/S clusters to target apoproteins. This is Cytosolic Fe-S cluster assembly factor NAR1 (NAR1) from Saccharomyces cerevisiae (strain ATCC 204508 / S288c) (Baker's yeast).